We begin with the raw amino-acid sequence, 126 residues long: Muscarinic acetylcholine receptor M4 (126 aa).

The tract at residues 1 to 90 (MKQSVKKPPP…LQPRTLNPAS (90 aa)) is disordered. Residues 1 to 126 (MKQSVKKPPP…PAGMRPAANV (126 aa)) lie on the Cytoplasmic side of the membrane. Pro residues predominate over residues 28-39 (APPPVLPPPPRP). Residues 47-57 (NESSSGSATQN) are compositionally biased toward polar residues. Residues 64-75 (TELSTTEATTPA) show a composition bias toward low complexity.

The protein belongs to the G-protein coupled receptor 1 family. Muscarinic acetylcholine receptor subfamily. CHRM4 sub-subfamily.

The protein localises to the cell membrane. Its subcellular location is the postsynaptic cell membrane. Functionally, the muscarinic acetylcholine receptor mediates various cellular responses, including inhibition of adenylate cyclase, breakdown of phosphoinositides and modulation of potassium channels through the action of G proteins. Primary transducing effect is inhibition of adenylate cyclase. May couple to multiple functional responses in cell lines. This Bos taurus (Bovine) protein is Muscarinic acetylcholine receptor M4 (CHRM4).